The primary structure comprises 311 residues: Phosphoribosylaminoimidazole-succinocarboxamide synthase (311 aa).

It belongs to the SAICAR synthetase family.

The catalysed reaction is 5-amino-1-(5-phospho-D-ribosyl)imidazole-4-carboxylate + L-aspartate + ATP = (2S)-2-[5-amino-1-(5-phospho-beta-D-ribosyl)imidazole-4-carboxamido]succinate + ADP + phosphate + 2 H(+). It functions in the pathway purine metabolism; IMP biosynthesis via de novo pathway; 5-amino-1-(5-phospho-D-ribosyl)imidazole-4-carboxamide from 5-amino-1-(5-phospho-D-ribosyl)imidazole-4-carboxylate: step 1/2. The chain is Phosphoribosylaminoimidazole-succinocarboxamide synthase from Aromatoleum aromaticum (strain DSM 19018 / LMG 30748 / EbN1) (Azoarcus sp. (strain EbN1)).